Here is a 226-residue protein sequence, read N- to C-terminus: N-(5'-phosphoribosyl)anthranilate isomerase 2 (226 aa).

It belongs to the TrpF family.

The catalysed reaction is N-(5-phospho-beta-D-ribosyl)anthranilate = 1-(2-carboxyphenylamino)-1-deoxy-D-ribulose 5-phosphate. It participates in amino-acid biosynthesis; L-tryptophan biosynthesis; L-tryptophan from chorismate: step 3/5. The chain is N-(5'-phosphoribosyl)anthranilate isomerase 2 (trpF2) from Methanosarcina mazei (strain ATCC BAA-159 / DSM 3647 / Goe1 / Go1 / JCM 11833 / OCM 88) (Methanosarcina frisia).